Reading from the N-terminus, the 32-residue chain is Cytochrome b6-f complex subunit 7 (32 aa).

A helical membrane pass occupies residues alanine 9–valine 29.

This sequence belongs to the PetM family. The 4 large subunits of the cytochrome b6-f complex are cytochrome b6, subunit IV (17 kDa polypeptide, PetD), cytochrome f and the Rieske protein, while the 4 small subunits are PetG, PetL, PetM and PetN. The complex functions as a dimer.

The protein resides in the plastid. It is found in the chloroplast thylakoid membrane. Component of the cytochrome b6-f complex, which mediates electron transfer between photosystem II (PSII) and photosystem I (PSI), cyclic electron flow around PSI, and state transitions. The sequence is that of Cytochrome b6-f complex subunit 7 from Porphyra purpurea (Red seaweed).